Here is a 223-residue protein sequence, read N- to C-terminus: ATP phosphoribosyltransferase (223 aa).

It belongs to the ATP phosphoribosyltransferase family. Short subfamily. As to quaternary structure, heteromultimer composed of HisG and HisZ subunits.

It is found in the cytoplasm. The enzyme catalyses 1-(5-phospho-beta-D-ribosyl)-ATP + diphosphate = 5-phospho-alpha-D-ribose 1-diphosphate + ATP. It participates in amino-acid biosynthesis; L-histidine biosynthesis; L-histidine from 5-phospho-alpha-D-ribose 1-diphosphate: step 1/9. Its function is as follows. Catalyzes the condensation of ATP and 5-phosphoribose 1-diphosphate to form N'-(5'-phosphoribosyl)-ATP (PR-ATP). Has a crucial role in the pathway because the rate of histidine biosynthesis seems to be controlled primarily by regulation of HisG enzymatic activity. This chain is ATP phosphoribosyltransferase, found in Bordetella pertussis (strain Tohama I / ATCC BAA-589 / NCTC 13251).